A 63-amino-acid chain; its full sequence is Large ribosomal subunit protein uL29 (63 aa).

Belongs to the universal ribosomal protein uL29 family.

This Aliivibrio fischeri (strain ATCC 700601 / ES114) (Vibrio fischeri) protein is Large ribosomal subunit protein uL29.